The sequence spans 374 residues: Flap endonuclease 1 (374 aa).

Positions 1-105 (MGVKGLNQLI…GELEKRMIRK (105 aa)) are N-domain. Asp34 is a Mg(2+) binding site. Positions 47 and 71 each coordinate DNA. Mg(2+) contacts are provided by Asp87, Glu159, Glu161, Asp180, and Asp182. Residues 123–254 (EMVRYEKRSV…VTAFKLIKEH (132 aa)) form an I-domain region. Glu159 contacts DNA. Residues Gly232 and Asp234 each coordinate DNA. A Mg(2+)-binding site is contributed by Asp234. Residues 341-349 (VQGRLDGFF) form an interaction with PCNA region. A compositionally biased stretch (basic and acidic residues) spans 354 to 365 (TEKRKPEQDKKT). A disordered region spans residues 354-374 (TEKRKPEQDKKTKGSKKAKKK).

Belongs to the XPG/RAD2 endonuclease family. FEN1 subfamily. In terms of assembly, interacts with PCNA. Three molecules of FEN1 bind to one PCNA trimer with each molecule binding to one PCNA monomer. PCNA stimulates the nuclease activity without altering cleavage specificity. Mg(2+) is required as a cofactor. Post-translationally, phosphorylated. Phosphorylation upon DNA damage induces relocalization to the nuclear plasma.

The protein localises to the nucleus. It is found in the nucleolus. The protein resides in the nucleoplasm. Its subcellular location is the mitochondrion. Its function is as follows. Structure-specific nuclease with 5'-flap endonuclease and 5'-3' exonuclease activities involved in DNA replication and repair. During DNA replication, cleaves the 5'-overhanging flap structure that is generated by displacement synthesis when DNA polymerase encounters the 5'-end of a downstream Okazaki fragment. It enters the flap from the 5'-end and then tracks to cleave the flap base, leaving a nick for ligation. Also involved in the long patch base excision repair (LP-BER) pathway, by cleaving within the apurinic/apyrimidinic (AP) site-terminated flap. Acts as a genome stabilization factor that prevents flaps from equilibrating into structures that lead to duplications and deletions. Also possesses 5'-3' exonuclease activity on nicked or gapped double-stranded DNA, and exhibits RNase H activity. Also involved in replication and repair of rDNA and in repairing mitochondrial DNA. In Meyerozyma guilliermondii (strain ATCC 6260 / CBS 566 / DSM 6381 / JCM 1539 / NBRC 10279 / NRRL Y-324) (Yeast), this protein is Flap endonuclease 1.